We begin with the raw amino-acid sequence, 340 residues long: Dihydroorotate dehydrogenase (quinone) (340 aa).

Residues 62-66 and Thr-86 contribute to the FMN site; that span reads AGMDK. Residue Lys-66 coordinates substrate. 111–115 lines the substrate pocket; it reads NRMGF. Residues Asn-139 and Asn-172 each contribute to the FMN site. Asn-172 contacts substrate. The Nucleophile role is filled by Ser-175. Asn-177 contributes to the substrate binding site. FMN contacts are provided by Lys-217 and Thr-245. A substrate-binding site is contributed by 246–247; it reads NT. FMN-binding positions include Gly-268, Gly-297, and 318 to 319; that span reads YS.

This sequence belongs to the dihydroorotate dehydrogenase family. Type 2 subfamily. As to quaternary structure, monomer. It depends on FMN as a cofactor.

It is found in the cell membrane. It catalyses the reaction (S)-dihydroorotate + a quinone = orotate + a quinol. It participates in pyrimidine metabolism; UMP biosynthesis via de novo pathway; orotate from (S)-dihydroorotate (quinone route): step 1/1. Catalyzes the conversion of dihydroorotate to orotate with quinone as electron acceptor. This Shewanella woodyi (strain ATCC 51908 / MS32) protein is Dihydroorotate dehydrogenase (quinone).